We begin with the raw amino-acid sequence, 987 residues long: Collagen alpha-1(I) chain (987 aa).

Residues 1-987 form a disordered region; that stretch reads GPMGPSGPRG…PGPPGPPGPP (987 aa). A compositionally biased stretch (low complexity) spans 20-39; that stretch reads PQGFQGPPGEPGEPGASGPM. Over residues 51-65 the composition is skewed to basic and acidic residues; sequence NGDDGEAGKPGRPGE. Serine 93 is modified (phosphoserine). Composition is skewed to low complexity over residues 101 to 117 and 141 to 153; these read DAGP…PGEN and AGAR…TGAA. The segment covering 155-167 has biased composition (pro residues); the sequence is PPGPTGPAGPPGF. 10 stretches are compositionally biased toward low complexity: residues 201–251, 354–380, 389–408, 422–444, 516–543, 602–614, 627–654, 662–677, 686–696, and 737–752; these read AGAA…APGP, KGIT…QDGR, ARGQ…AGEP, AVGA…AGPA, NGAP…PGIQ, PNGP…ARGA, AGFA…KGDA, PTGA…APGP, ATGFPGAAGRV, and SGEK…AGAP. Residues 756-765 are compositionally biased toward gly residues; that stretch reads GPQGIGGQRG. Positions 799–809 are enriched in pro residues; sequence PPGPMGPPGIA. Residues 811-826 are compositionally biased toward low complexity; that stretch reads PPGESGREGSPGAEGS. Pro residues predominate over residues 845–860; it reads AGPPGAPGAPGAPGPV. Positions 896–907 are enriched in basic and acidic residues; that stretch reads RGDKGETGEQGD. The segment covering 923-956 has biased composition (low complexity); that stretch reads PGEQGPSGASGPAGPRGPPGSAGAPGKDGINGIP. Pro residues predominate over residues 972-987; the sequence is VGPPGPPGPPGPPGPP.

Belongs to the fibrillar collagen family. As to quaternary structure, trimers of one alpha 2(I) and two alpha 1(I) chains. Post-translationally, prolines at the third position of the tripeptide repeating unit (G-X-Y) are hydroxylated in some or all of the chains. As to expression, forms the fibrils of tendon, ligaments and bones. In bones, the fibrils are mineralized with calcium hydroxyapatite.

The protein resides in the secreted. The protein localises to the extracellular space. Its subcellular location is the extracellular matrix. In terms of biological role, type I collagen is a member of group I collagen (fibrillar forming collagen). The polypeptide is Collagen alpha-1(I) chain (Orycteropus afer (Aardvark)).